The sequence spans 450 residues: Plasmepsin VII (450 aa).

The N-terminal stretch at 1–24 (MNKNIIQIYLFVFILLLKQHIVIL) is a signal peptide. The Peptidase A1 domain occupies 92–441 (YYGEVQIGEQ…DKDNLKIGFV (350 aa)). Active-site residues include Asp-111 and Asp-324.

Belongs to the peptidase A1 family.

The protein resides in the cytoplasm. The chain is Plasmepsin VII from Plasmodium falciparum (isolate NF54).